A 261-amino-acid chain; its full sequence is MTHQLHQYHLVDPSPWPLTGAMGSLLLASGLAVWFHTNNTMLLKFGLLTLLLTMFQWWRDIIRESTYQGHHTSGVQKNMRYGMILFITSEVFFFLGFFWALYHVSLVPTPELGAEWPPIGITPLNPMEVPLLNTAVLLSSGATITWSHHTMMKGNKKEATHALMLTIILGAYFTALQLSEYMETPFTIADSVYGSLFFVATGFHGLHVMIGTSFLMVCALRLAKHHFTITHHFGYEAAIWYWHFVDIVWLFLYISVYWWGS.

Over 1–15 (MTHQLHQYHLVDPSP) the chain is Mitochondrial matrix. The chain crosses the membrane as a helical span at residues 16-34 (WPLTGAMGSLLLASGLAVW). At 35-40 (FHTNNT) the chain is on the mitochondrial intermembrane side. A helical membrane pass occupies residues 41–66 (MLLKFGLLTLLLTMFQWWRDIIREST). Over 67–72 (YQGHHT) the chain is Mitochondrial matrix. A helical transmembrane segment spans residues 73–105 (SGVQKNMRYGMILFITSEVFFFLGFFWALYHVS). Topologically, residues 106–128 (LVPTPELGAEWPPIGITPLNPME) are mitochondrial intermembrane. A helical transmembrane segment spans residues 129–152 (VPLLNTAVLLSSGATITWSHHTMM). Topologically, residues 153-155 (KGN) are mitochondrial matrix. A helical membrane pass occupies residues 156-183 (KKEATHALMLTIILGAYFTALQLSEYME). Topologically, residues 184 to 190 (TPFTIAD) are mitochondrial intermembrane. The chain crosses the membrane as a helical span at residues 191–223 (SVYGSLFFVATGFHGLHVMIGTSFLMVCALRLA). The Mitochondrial matrix segment spans residues 224–232 (KHHFTITHH). A helical transmembrane segment spans residues 233–256 (FGYEAAIWYWHFVDIVWLFLYISV). Topologically, residues 257–261 (YWWGS) are mitochondrial intermembrane.

It belongs to the cytochrome c oxidase subunit 3 family. In terms of assembly, component of the cytochrome c oxidase (complex IV, CIV), a multisubunit enzyme composed of 14 subunits. The complex is composed of a catalytic core of 3 subunits MT-CO1, MT-CO2 and MT-CO3, encoded in the mitochondrial DNA, and 11 supernumerary subunits COX4I, COX5A, COX5B, COX6A, COX6B, COX6C, COX7A, COX7B, COX7C, COX8 and NDUFA4, which are encoded in the nuclear genome. The complex exists as a monomer or a dimer and forms supercomplexes (SCs) in the inner mitochondrial membrane with NADH-ubiquinone oxidoreductase (complex I, CI) and ubiquinol-cytochrome c oxidoreductase (cytochrome b-c1 complex, complex III, CIII), resulting in different assemblies (supercomplex SCI(1)III(2)IV(1) and megacomplex MCI(2)III(2)IV(2)).

It is found in the mitochondrion inner membrane. It carries out the reaction 4 Fe(II)-[cytochrome c] + O2 + 8 H(+)(in) = 4 Fe(III)-[cytochrome c] + 2 H2O + 4 H(+)(out). Its function is as follows. Component of the cytochrome c oxidase, the last enzyme in the mitochondrial electron transport chain which drives oxidative phosphorylation. The respiratory chain contains 3 multisubunit complexes succinate dehydrogenase (complex II, CII), ubiquinol-cytochrome c oxidoreductase (cytochrome b-c1 complex, complex III, CIII) and cytochrome c oxidase (complex IV, CIV), that cooperate to transfer electrons derived from NADH and succinate to molecular oxygen, creating an electrochemical gradient over the inner membrane that drives transmembrane transport and the ATP synthase. Cytochrome c oxidase is the component of the respiratory chain that catalyzes the reduction of oxygen to water. Electrons originating from reduced cytochrome c in the intermembrane space (IMS) are transferred via the dinuclear copper A center (CU(A)) of subunit 2 and heme A of subunit 1 to the active site in subunit 1, a binuclear center (BNC) formed by heme A3 and copper B (CU(B)). The BNC reduces molecular oxygen to 2 water molecules using 4 electrons from cytochrome c in the IMS and 4 protons from the mitochondrial matrix. The sequence is that of Cytochrome c oxidase subunit 3 (MT-CO3) from Lycodon semicarinatus (Ryukyu odd-tooth snake).